We begin with the raw amino-acid sequence, 102 residues long: Small ribosomal subunit protein uS10 (102 aa).

It belongs to the universal ribosomal protein uS10 family. In terms of assembly, part of the 30S ribosomal subunit.

Functionally, involved in the binding of tRNA to the ribosomes. In Coprothermobacter proteolyticus (strain ATCC 35245 / DSM 5265 / OCM 4 / BT), this protein is Small ribosomal subunit protein uS10.